Consider the following 205-residue polypeptide: Isochorismatase domain-containing protein 2 (205 aa).

It belongs to the isochorismatase family. As to quaternary structure, interacts with CDKN2A.

It is found in the cytoplasm. It localises to the nucleus. The polypeptide is Isochorismatase domain-containing protein 2 (ISOC2) (Macaca fascicularis (Crab-eating macaque)).